The sequence spans 553 residues: HTH-type transcriptional regulator SgrR (553 aa).

In terms of domain architecture, HTH marR-type spans 1-117 (MSTARLQQQF…LSQLGRSFRQ (117 aa)). Positions 26 to 49 (LQELAEVLCCSRRHVRSLLGSMQQ) form a DNA-binding region, H-T-H motif. The tract at residues 163–494 (ELEPDLSHHW…EELHQDVELW (332 aa)) is solute-binding.

In terms of biological role, activates the small RNA gene sgrS under glucose-phosphate stress conditions as well as yfdZ. Represses its own transcription under both stress and non-stress conditions. Might act as a sensor of the intracellular accumulation of phosphoglucose by binding these molecules in its C-terminal solute-binding domain. The polypeptide is HTH-type transcriptional regulator SgrR (Yersinia enterocolitica serotype O:8 / biotype 1B (strain NCTC 13174 / 8081)).